The following is a 233-amino-acid chain: Leucyl/phenylalanyl-tRNA--protein transferase (233 aa).

This sequence belongs to the L/F-transferase family.

It localises to the cytoplasm. It carries out the reaction N-terminal L-lysyl-[protein] + L-leucyl-tRNA(Leu) = N-terminal L-leucyl-L-lysyl-[protein] + tRNA(Leu) + H(+). It catalyses the reaction N-terminal L-arginyl-[protein] + L-leucyl-tRNA(Leu) = N-terminal L-leucyl-L-arginyl-[protein] + tRNA(Leu) + H(+). The catalysed reaction is L-phenylalanyl-tRNA(Phe) + an N-terminal L-alpha-aminoacyl-[protein] = an N-terminal L-phenylalanyl-L-alpha-aminoacyl-[protein] + tRNA(Phe). Its function is as follows. Functions in the N-end rule pathway of protein degradation where it conjugates Leu, Phe and, less efficiently, Met from aminoacyl-tRNAs to the N-termini of proteins containing an N-terminal arginine or lysine. This is Leucyl/phenylalanyl-tRNA--protein transferase from Shewanella denitrificans (strain OS217 / ATCC BAA-1090 / DSM 15013).